The chain runs to 216 residues: Ephrin-A1 (216 aa).

The N-terminal stretch at 1–28 is a signal peptide; the sequence is MMELYRAAVQLIVGVGLGVGLWLREAQG. In terms of domain architecture, Ephrin RBD spans 29–161; the sequence is ERHIVFWNSS…RLRVHVSGRT (133 aa). The N-linked (GlcNAc...) asparagine glycan is linked to N36. C61 and C102 form a disulfide bridge. Residues 162-181 are disordered; that stretch reads TPPPVNVHTPRSHIQSDEPE. S195 is lipidated: GPI-anchor amidated serine. The propeptide at 196 to 216 is removed in mature form; the sequence is AAPGTPCTLYGLLLAALLLRL.

Belongs to the ephrin family. As to quaternary structure, binds to the receptor tyrosine kinases EPHA2, EPHA4, EPHA5, EPHA6 and EPHA7. Also binds with low affinity to EPHA1.

It is found in the membrane. Its function is as follows. Cell surface GPI-bound ligand for Eph receptors, a family of receptor tyrosine kinases which are crucial for migration, repulsion and adhesion during neuronal, vascular and epithelial development. Binds promiscuously Eph receptors residing on adjacent cells, leading to contact-dependent bidirectional signaling into neighboring cells. This Xenopus laevis (African clawed frog) protein is Ephrin-A1 (efna1).